A 134-amino-acid polypeptide reads, in one-letter code: DNA-binding protein H-NS (134 aa).

A DNA-binding region spans residues 111 to 116; it reads QGRTLA.

Belongs to the histone-like protein H-NS family. As to quaternary structure, homodimer that oligomerizes on DNA into higher-order complexes that form bridges between disparate regions of DNA compacting it. Interacts with YmoA and other similar proteins.

Its subcellular location is the cytoplasm. The protein resides in the nucleoid. In terms of biological role, a DNA-binding protein implicated in transcriptional repression and chromosome organization and compaction. Binds nucleation sites in AT-rich DNA and bridges them, forming higher-order nucleoprotein complexes and condensing the chromosome. As many horizontally transferred genes are AT-rich, it plays a central role in silencing foreign genes. A subset of genes are repressed by H-NS in association with other proteins. The polypeptide is DNA-binding protein H-NS (hns) (Proteus vulgaris).